The primary structure comprises 388 residues: Alanine racemase 1 (388 aa).

Residue Lys40 is the Proton acceptor; specific for D-alanine of the active site. At Lys40 the chain carries N6-(pyridoxal phosphate)lysine. Arg138 is a binding site for substrate. The active-site Proton acceptor; specific for L-alanine is Tyr268. Met316 provides a ligand contact to substrate.

Belongs to the alanine racemase family. Pyridoxal 5'-phosphate serves as cofactor.

The catalysed reaction is L-alanine = D-alanine. It participates in amino-acid biosynthesis; D-alanine biosynthesis; D-alanine from L-alanine: step 1/1. Functionally, catalyzes the interconversion of L-alanine and D-alanine. May also act on other amino acids. The sequence is that of Alanine racemase 1 (alr1) from Caldanaerobacter subterraneus subsp. tengcongensis (strain DSM 15242 / JCM 11007 / NBRC 100824 / MB4) (Thermoanaerobacter tengcongensis).